A 933-amino-acid chain; its full sequence is Phospholipase SGR2 (933 aa).

Basic and acidic residues predominate over residues 1–14 (MEDRETHLGTREVN). The disordered stretch occupies residues 1 to 22 (MEDRETHLGTREVNETSPDLLK). The active site involves Ser-444. Disordered regions lie at residues 475-517 (PDEE…GQDN) and 553-598 (RGGQ…ESVN). A compositionally biased stretch (polar residues) spans 505 to 517 (QLNNPEKITGQDN). Residues 553–563 (RGGQEDDHHDS) show a composition bias toward basic and acidic residues. Residues 593 to 631 (DKESVNSNNEERIKLLQDEVNSLRSKVAQLLSENARILS) adopt a coiled-coil conformation. Residues 669 to 868 (LEFKVDTFFA…ALFIIKHLYR (200 aa)) enclose the DDHD domain. The disordered stretch occupies residues 871–903 (PDGPNSPTESTEGDDSPKDSSRPHSWIDRREAD). Positions 885 to 902 (DSPKDSSRPHSWIDRREA) are enriched in basic and acidic residues.

In terms of assembly, forms oligomers. Expressed in roots, hypocotyls, leaves, stems and floral buds, and, at low levels, in siliques.

It localises to the vacuole membrane. Involved in vacuolar formation or function (e.g. formation of vacuolar membrane 'bulbs'). Required for amyloplast sedimentation in the endodermis during shoot gravitropism, which are thus acting as statoliths. Particularly important for the negative gravitropism leading to leaf movement observed in darkness. This is Phospholipase SGR2 (SGR2) from Arabidopsis thaliana (Mouse-ear cress).